Here is a 122-residue protein sequence, read N- to C-terminus: UPF0102 protein XAC0764 (122 aa).

It belongs to the UPF0102 family.

The sequence is that of UPF0102 protein XAC0764 from Xanthomonas axonopodis pv. citri (strain 306).